The following is a 490-amino-acid chain: uncharacterized protein (490 aa).

A helical transmembrane segment spans residues 27-47; that stretch reads VYVFLTTIILLLSLISTLIII.

The protein localises to the membrane. This is an uncharacterized protein from Borreliella burgdorferi (strain ATCC 35210 / DSM 4680 / CIP 102532 / B31) (Borrelia burgdorferi).